A 513-amino-acid polypeptide reads, in one-letter code: Bifunctional purine biosynthesis protein PurH (513 aa).

The MGS-like domain maps to 1 to 144 (MKRALISVSD…KNYQDVTVVT (144 aa)).

Belongs to the PurH family.

It catalyses the reaction (6R)-10-formyltetrahydrofolate + 5-amino-1-(5-phospho-beta-D-ribosyl)imidazole-4-carboxamide = 5-formamido-1-(5-phospho-D-ribosyl)imidazole-4-carboxamide + (6S)-5,6,7,8-tetrahydrofolate. It carries out the reaction IMP + H2O = 5-formamido-1-(5-phospho-D-ribosyl)imidazole-4-carboxamide. The protein operates within purine metabolism; IMP biosynthesis via de novo pathway; 5-formamido-1-(5-phospho-D-ribosyl)imidazole-4-carboxamide from 5-amino-1-(5-phospho-D-ribosyl)imidazole-4-carboxamide (10-formyl THF route): step 1/1. It functions in the pathway purine metabolism; IMP biosynthesis via de novo pathway; IMP from 5-formamido-1-(5-phospho-D-ribosyl)imidazole-4-carboxamide: step 1/1. The polypeptide is Bifunctional purine biosynthesis protein PurH (Lactobacillus acidophilus (strain ATCC 700396 / NCK56 / N2 / NCFM)).